Consider the following 534-residue polypeptide: MFSWVSKDARRKKEPELFQTVAEGLRQLYAQKLLPLEEHYRFHEFHSPALEDADFDNKPMVLLVGQYSTGKTTFIRHLIEQDFPGMRIGPEPTTDSFIAVMHGPTEGVVPGNALVVDPRRPFRKLNAFGNAFLNRFMCAQLPNPVLDSISIIDTPGILSGEKQRISRGYDFAAVLEWFAERVDRIILLFDAHKLDISDEFSEVIKALKNHEDKIRVVLNKADQIETQQLMRVYGALMWSLGKIINTPEVVRVYIGSFWSHPLLIPDNRKLFEAEEQDLFKDIQSLPRNAALRKLNDLIKRARLAKVHAYIISSLKKEMPNVFGKESKKKELVNNLGEIYQKIEREHQISSGDFPSLRKMQELLQTQDFSKFQALKPKLLDTVDDMLANDIARLMVMVRQEESLMPSQAVKGGAFDGTMNGPFGHGYGEGAGEGIDDVEWVVGKDKPTYDEIFYTLSPVNGKITGANAKKEMVKSKLPNTVLGKIWKLADVDKDGLLDDEEFALANHLIKVKLEGHELPADLPPHLIPPSKRRHE.

The residue at position 1 (methionine 1) is an N-acetylmethionine. The Dynamin-type G domain maps to 55–286 (FDNKPMVLLV…DLFKDIQSLP (232 aa)). Residues 65–72 (GQYSTGKT) are G1 motif. 65-72 (GQYSTGKT) lines the ATP pocket. The G2 motif stretch occupies residues 91-92 (EP). The tract at residues 153-156 (DTPG) is G3 motif. The stretch at 198-227 (DEFSEVIKALKNHEDKIRVVLNKADQIETQ) forms a coiled coil. Positions 219–222 (NKAD) are G4 motif. Lysine 220 lines the ATP pocket. Isoleucine 243 is a region of interest (G5 motif). Position 258 (tryptophan 258) interacts with ATP. Residues serine 355 and serine 456 each carry the phosphoserine modification. One can recognise an EH domain in the interval 444-532 (DKPTYDEIFY…PHLIPPSKRR (89 aa)). In terms of domain architecture, EF-hand spans 476-511 (LPNTVLGKIWKLADVDKDGLLDDEEFALANHLIKVK). Ca(2+) contacts are provided by aspartate 489, aspartate 491, aspartate 493, and glutamate 500.

The protein belongs to the TRAFAC class dynamin-like GTPase superfamily. Dynamin/Fzo/YdjA family. EHD subfamily. As to quaternary structure, homooligomer, and heterooligomer with EHD2, EHD3 and EHD4, ATP-binding is required for heterooligomerization. Interacts (via EH domain) with MICALL1 (via NPF1 motif); the interaction is direct and recruits EHD1 to membranes. Interacts with RAB35; the interaction is indirect through MICALL1 and recruits EHD1 to membranes. Interacts (via EH domain) with PACSIN2 (via NPF motifs); regulates localization to tubular recycling endosome membranes. Interacts with PACSIN1. Interacts with RAB8A. Interacts with FER1L5 (via second C2 domain). Interacts with MYOF. Interacts with ZFYVE20. Interacts (via EH domain) with RAB11FIP2.

The protein localises to the recycling endosome membrane. It localises to the early endosome membrane. Its subcellular location is the cell membrane. It is found in the cell projection. The protein resides in the cilium membrane. Functionally, ATP- and membrane-binding protein that controls membrane reorganization/tubulation upon ATP hydrolysis. In vitro causes vesiculation of endocytic membranes. Acts in early endocytic membrane fusion and membrane trafficking of recycling endosomes. Recruited to endosomal membranes upon nerve growth factor stimulation, indirectly regulates neurite outgrowth. Plays a role in myoblast fusion. Involved in the unidirectional retrograde dendritic transport of endocytosed BACE1 and in efficient sorting of BACE1 to axons implicating a function in neuronal APP processing. Plays a role in the formation of the ciliary vesicle (CV), an early step in cilium biogenesis. Proposed to be required for the fusion of distal appendage vesicles (DAVs) to form the CV by recruiting SNARE complex component SNAP29. Is required for recruitment of transition zone proteins CEP290, RPGRIP1L, TMEM67 and B9D2, and of IFT20 following DAV reorganization before Rab8-dependent ciliary membrane extension. Required for the loss of CCP110 form the mother centriole essential for the maturation of the basal body during ciliogenesis. In Rattus norvegicus (Rat), this protein is EH domain-containing protein 1.